A 329-amino-acid chain; its full sequence is Transposable element Tc3 transposase (329 aa).

A DNA-binding region spans residues 2 to 135; sequence PRGSALSDTE…LEFAKNNMGT (134 aa).

Belongs to the transposase 5 family. As to quaternary structure, homodimer or homotetramer.

It localises to the nucleus. In terms of biological role, binds specifically to the terminal nucleotides of the TC3 inverted repeat. Its expression results in frequent excision and transposition of endogenous TC3 elements. TC3 transposase acts by making double strand breaks at the ends of TC3 element. The excised element would then be inserted into a target sequence. This is Transposable element Tc3 transposase (tc3a) from Caenorhabditis elegans.